Consider the following 109-residue polypeptide: Cell division protein ZapA (109 aa).

Residues 21–99 (PEQRDALNQA…IEQALLEQGR (79 aa)) adopt a coiled-coil conformation.

This sequence belongs to the ZapA family. Type 1 subfamily. As to quaternary structure, homodimer. Interacts with FtsZ.

The protein localises to the cytoplasm. Functionally, activator of cell division through the inhibition of FtsZ GTPase activity, therefore promoting FtsZ assembly into bundles of protofilaments necessary for the formation of the division Z ring. It is recruited early at mid-cell but it is not essential for cell division. The protein is Cell division protein ZapA of Cronobacter sakazakii (strain ATCC BAA-894) (Enterobacter sakazakii).